The chain runs to 421 residues: Leucine-rich repeat-containing protein 42 (421 aa).

LRR repeat units follow at residues 149-170 (VLCSLCLRNRYLVVAEKLEEIK), 174-195 (ELTRLDLSCCWLGDEHELLEHL), 202-222 (SVTQLHLKDNCLSDAGIRKMT), 234-255 (NLALLDLSCNPEITDAGIGYLF), and 259-280 (KLNCLDISGTGLKDIKAVKDKL). The interval 376–406 (PLLSQESKKSKKRAFKESEQEQSSPQSAKQK) is disordered. The segment covering 396 to 406 (EQSSPQSAKQK) has biased composition (low complexity). Position 399 is a phosphoserine (Ser-399).

The protein belongs to the LRRC42 family.

In Mus musculus (Mouse), this protein is Leucine-rich repeat-containing protein 42 (Lrrc42).